The sequence spans 2572 residues: MAEAVKPRRAKAKASRTKGKEKKKHEALQTCDAGPLPETCREQESPCPASELKGDDLKSSADPQLHSDVCGWNESEMFDIPLTSLTIGDEGPPVQDTEDLKERGEVTAGDGDDEMELKVDPGDNVIAKGEPCKNFPEVEDHTLIQCGPPESTLQPDFPCTQQAVEGSHAREHPTRKQDEAALGCSKVFQNVSLHSSYEAKEVSQPPRVKKLYPELPAEIAEVPALVAVKPLLRSERLYPELPSQPEVTPFTKEQLKLLEPGSWLENVASYVEEFDNIAHQDRHEFYELLLNYSRCRKQLLLAEAELLTLMSDCHSAKSRLWHFKDEQMAVQGICADQVKVYGHHHYQRVEMNENVLGELKKLFDAKSEHLHQTLTLHSYTSVLSRLQVESYIFTLLNSSAALRSLAVYQADQVPKLTESIPSDVCQLKECISVLFMFTRRVSEDAQFHEDILLWLQKLVSVLQRVGCPGDHFFLLNHVLRCPAGIRKWAVPFIQIKVLNNPSGVFHFMQSLALLMSPVKNRAEFMCHMKPSEWKPSSSGPASGNWTLVDEAGEEDEDPETSWILLNEDDLVTLLSQFPFQELFQHLLGFKAKGDYLPETTRPQEMMKIFAFANSLVELLAVGLDTFNRARYRQFVKRIGYLIRMTLGYVSDHWAQYVSHSTGAGLTPQPYSMEKLQVEFDELFLRAVLHVLKAKRLGIWLFMSEMPFGTLSVQMLWKLLYLMHQVESGDLQQLCASLQPAECKRRLQDPEHFASFEKCLSSINSSEEICLLTAFAQMARARRTNVDEDFIKIIVLEIYEVSYVTLSTRETFSKVGRELLGAIAAVHPEIISVLLDRVQETIDQVGMVSLYLFKELPLYLWRPSAPEIAVIRDWLLNNNLTAVKNKLACVILEGLNWGFTEQGTLHLDQALHTEVALLVLEAYQKYLAQKPYTGLISESMKQVSYLASIVRYGETPETSFNQWAWNLILRLKLHKNDFGRQNFPVIPFCSTVPDMTESSMFHPLLKAVKSGLPIGCYLALAVTAVGHSLEKFCAEGIPLLGVLVQSRHLRAVVHALDKILPVFYPYQCYLLKNEQFLSNLLLFLQLDSGVPQGVTQQVTHRVAQHLTGAVHGDNVKLLSSMIQAHICVSTQPDGVGPVAVLEFWVQALISQHLWYREQPILFLMDHLCKTAFHLMQEDCVQKLLYQQHKNALGYHCDRSLLSSLVNWIVAGNITPSFVEGLSTSTQVWFAWTVLNMESIFEEDSQLRRVVERELVINAFSPDQALKKAQVQLKLPIVPSLQRLLIYRWAHQALVTPSDHPLLPLIWQKFFLLYLHRPGPQYGLPVDGCIGRRFFQSPSHVNLLKDMKRRLTEVADFHYAASKALRVPAEGSEGTPEGQAGTPGFLTSPELHRELVRLFNVYVLWLEDENFQKGDTYIPSLPKHYDVHRLAKVMQNQQDLWMEYVNMERIQHEFQETVALWTQAKLESHAAPCSSSAQLDFTDPLLAKARVLSNLEKHEAPHPPLLLHPVRPPVPLIPSAALLTQKDSTQLMCTDLNLLQQQARSATLRESQQVALDGELLETMPKQYVNREDQATLHLECRGSSGKKCQGAAVVTVQFEGMNKNEAVSQQIHVLQKEVRQLQAEAAQPPALNVVEAAVHAENLITALVNTYKLQPTPGVQKLGISLFFTVVDHVSDETQRHPPTRQFFTSCIEILGQVFVSGTKSECRKLLQTILKNRRLCSLLAPFFTPNAAPAEFIQLYERVVTCLREDNSDVIFMLLTKFDIQQWLNSTKPPLSDRTRLLESIHLALTAWGLEPEEDILMPFNLFCKHWTHLLLYQFPDQYSDVLRLLVQSSAEQLLSPECWKATLRALGCYAPSSQQGAASVESSGLHSASRVLLSDKQVMETVQWLSDFFYKLRLSKLDFKSFGLFSKWSPYMADVKTFLGYLVKRLTDLEIASLSQDPTASSKEVLRSLHAQIIQLFKPWILVLEDAESSHQRHYPWLESDTAVASSIVQLFSDCVGSLHTSFKDRLLPGDEGALRLHLLHYCETCTAPKMPEFILYAFHSAYQRLEWKDLHPDQRLMEAFFKVERGSPKSCFLFLGSVLCRVNWVSVLSDAWNPSPLPETQSMAVCLLFMMVLLAKEAQLVDEPDSPLLSLLGQTSSLSWHLVDLVSYQSVLGYFSSHYPPSVVLANDCSSELIVKLLKVSAGLSAHADGRKHVDIVPKCQAFTHQMVQFLSALEQTGKITFPALEREISKLLDDIIIFNPPDMDSQTRHMALSSFFVEVLMMMNNAAVPTAEFLAVSIRTWIGQRVHGLIVLPLLTAACQSLASVRHMAEITEACIMAYFKESSLDQNLGWGPVLVSLQVPQLTARDFLEECLALGSCLTLYVYLLQCLNSEQTVKNDMKMLLVVSGWLEQVYPSSAQEEAKLFLWWHQILQLSLIQLEQNDSVLTESVIRILLMLQSRQSLMAEERLSSGILGAIGLGRRSPLSNRFRVAARSMAAFLLVQVPAEDQIRLKPSSELHLAPKAQQVLTALESMTLSKQYVEYQDQILHALQFIRHPGHCLQNGKSFLALLVNRLYPEVHYLDNIR.

Disordered regions lie at residues 1-68 and 84-125; these read MAEA…LHSD and SLTI…GDNV. Residues 7–25 show a composition bias toward basic residues; the sequence is PRRAKAKASRTKGKEKKKH. A coiled-coil region spans residues 1600–1626; the sequence is MNKNEAVSQQIHVLQKEVRQLQAEAAQ.

Belongs to the EPG5 family. Interacts with RAN.

The protein localises to the cytoplasm. It is found in the perinuclear region. The protein resides in the lysosome. In terms of biological role, involved in autophagy. May play a role in a late step of autophagy, such as clearance of autophagosomal cargo. Plays a key role in innate and adaptive immune response triggered by unmethylated cytidine-phosphate-guanosine (CpG) dinucleotides from pathogens, and mediated by the nucleotide-sensing receptor TLR9. It is necessary for the translocation of CpG dinucleotides from early endosomes to late endosomes and lysosomes, where TLR9 is located. In Mus musculus (Mouse), this protein is Ectopic P granules protein 5 homolog (Epg5).